Consider the following 396-residue polypeptide: Protein BOP3 (396 aa).

Disordered regions lie at residues 1-22 (MSTF…NNVN), 98-126 (GVPA…ENLP), 145-168 (PTPM…GISH), 203-239 (VARR…KFTN), 254-274 (RDQQ…QQDL), and 355-396 (REGR…LNST). 3 stretches are compositionally biased toward polar residues: residues 111 to 124 (QPHN…SSEN), 159 to 168 (ASSSTGGISH), and 210 to 230 (GTKS…SRNL). Basic and acidic residues predominate over residues 355–369 (REGRQVHDDLDDRTC). Positions 370 to 396 (SESSSRNESPVRTITKDNSVGKILNST) are enriched in polar residues.

The protein resides in the cytoplasm. It localises to the nucleus. Involved in resistance to methylmercury. Overexpression suppresses a PAM1-SLV3 double null mutation. This is Protein BOP3 (BOP3) from Saccharomyces cerevisiae (strain ATCC 204508 / S288c) (Baker's yeast).